Here is a 438-residue protein sequence, read N- to C-terminus: MSVTAKIIPQEIIRLKRDGKILDEQAINGFVSGLVDGNFSDSQVGAMAMAIFQQGMSIDERVNFTKAMMRSGEVLSWEGFDGPIVDKHSTGGVGDKVSFMLAAIVAACGGYVPMISGRGLGHTGGTADKLESIAGFNVQPSISEFKRIVKDVGVAIISQTDNLAPADKRLYSIRDVTATVESIPLITASILSKKLAAGLDVLVMDVKVGNGAMMNNLDDAKALAQSITSVANGAGVKTQAIITDMNQVLGTSAGNAIEMYETVKYLTGKQREPRLHKIVQALASAMLINTNLASSEKDAREKIDKVLNSGLAAEKFDRMVSALGGPKNFIEKPWDSMKKANVITEVRALQHGYIAQTDTRAIGMSVVGLGGGRTAPTQQVDHSVGFDRILPLGVQVNRGEVIARLHAKDEDSANRAIEQFNNAITYSEESPELPPVIY.

The protein belongs to the thymidine/pyrimidine-nucleoside phosphorylase family. In terms of assembly, homodimer.

The enzyme catalyses thymidine + phosphate = 2-deoxy-alpha-D-ribose 1-phosphate + thymine. It functions in the pathway pyrimidine metabolism; dTMP biosynthesis via salvage pathway; dTMP from thymine: step 1/2. The enzymes which catalyze the reversible phosphorolysis of pyrimidine nucleosides are involved in the degradation of these compounds and in their utilization as carbon and energy sources, or in the rescue of pyrimidine bases for nucleotide synthesis. This chain is Thymidine phosphorylase, found in Colwellia psychrerythraea (strain 34H / ATCC BAA-681) (Vibrio psychroerythus).